Consider the following 69-residue polypeptide: Conotoxin SIVA (69 aa).

Positions 1-21 (MGMRMMFTVFLLVVLATTVVS) are cleaved as a signal peptide. A propeptide spanning residues 22–38 (TPSDRASDGRNAAVHER) is cleaved from the precursor. A Pyrrolidone carboxylic acid modification is found at glutamine 39. A glycan (O-linked (HexNAc...) serine) is linked at serine 45. Proline 55, proline 60, and proline 61 each carry 4-hydroxyproline. A Cysteine amide modification is found at cysteine 68.

This sequence belongs to the conotoxin A superfamily. Post-translationally, contains 3 disulfide bonds. O-linked glycan consists of Hex3-HexNAc2 pentasaccharide. In terms of tissue distribution, expressed by the venom duct.

The protein localises to the secreted. Functionally, neurotoxin with probable activity on sodium channel. Induces intense repetitive firing of the frog neuromuscular junction, leading to a tetanic contracture in muscle fiber (spastic paralysis). In vivo, shows the same effect as the whole venom when injected on fish. Intraperitoneal injection into fish induces a period of rapid swimming followed by a spastic paralysis with stiff fibrillating fins. At high doses, the peptide is lethal to both fish and mice. The chain is Conotoxin SIVA from Conus striatus (Striated cone).